A 295-amino-acid polypeptide reads, in one-letter code: Elongation factor Ts (295 aa).

The involved in Mg(2+) ion dislocation from EF-Tu stretch occupies residues 79 to 82; that stretch reads TDFV.

This sequence belongs to the EF-Ts family.

The protein resides in the cytoplasm. Functionally, associates with the EF-Tu.GDP complex and induces the exchange of GDP to GTP. It remains bound to the aminoacyl-tRNA.EF-Tu.GTP complex up to the GTP hydrolysis stage on the ribosome. The polypeptide is Elongation factor Ts (Mycoplasma capricolum subsp. capricolum (strain California kid / ATCC 27343 / NCTC 10154)).